Reading from the N-terminus, the 150-residue chain is 3-dehydroquinate dehydratase (150 aa).

Catalysis depends on Y26, which acts as the Proton acceptor. Positions 77, 83, and 90 each coordinate substrate. The active-site Proton donor is H103. Substrate contacts are provided by residues 104–105 and R114; that span reads LS.

This sequence belongs to the type-II 3-dehydroquinase family. As to quaternary structure, homododecamer.

The enzyme catalyses 3-dehydroquinate = 3-dehydroshikimate + H2O. It functions in the pathway metabolic intermediate biosynthesis; chorismate biosynthesis; chorismate from D-erythrose 4-phosphate and phosphoenolpyruvate: step 3/7. Catalyzes a trans-dehydration via an enolate intermediate. The polypeptide is 3-dehydroquinate dehydratase (Enterobacter sp. (strain 638)).